The sequence spans 258 residues: Methylthioribulose-1-phosphate dehydratase (258 aa).

Residues methionine 1–aspartate 21 form a disordered region. Cysteine 105 is a substrate binding site. Residues histidine 123 and histidine 125 each coordinate Zn(2+). Glutamate 153 serves as the catalytic Proton donor/acceptor. Position 210 (histidine 210) interacts with Zn(2+).

This sequence belongs to the aldolase class II family. MtnB subfamily. It depends on Zn(2+) as a cofactor.

It localises to the cytoplasm. The catalysed reaction is 5-(methylsulfanyl)-D-ribulose 1-phosphate = 5-methylsulfanyl-2,3-dioxopentyl phosphate + H2O. The protein operates within amino-acid biosynthesis; L-methionine biosynthesis via salvage pathway; L-methionine from S-methyl-5-thio-alpha-D-ribose 1-phosphate: step 2/6. Its function is as follows. Catalyzes the dehydration of methylthioribulose-1-phosphate (MTRu-1-P) into 2,3-diketo-5-methylthiopentyl-1-phosphate (DK-MTP-1-P). This Neurospora crassa (strain ATCC 24698 / 74-OR23-1A / CBS 708.71 / DSM 1257 / FGSC 987) protein is Methylthioribulose-1-phosphate dehydratase.